A 962-amino-acid polypeptide reads, in one-letter code: Glycine dehydrogenase (decarboxylating) (962 aa).

Lysine 709 is subject to N6-(pyridoxal phosphate)lysine.

This sequence belongs to the GcvP family. The glycine cleavage system is composed of four proteins: P, T, L and H. Requires pyridoxal 5'-phosphate as cofactor.

It catalyses the reaction N(6)-[(R)-lipoyl]-L-lysyl-[glycine-cleavage complex H protein] + glycine + H(+) = N(6)-[(R)-S(8)-aminomethyldihydrolipoyl]-L-lysyl-[glycine-cleavage complex H protein] + CO2. In terms of biological role, the glycine cleavage system catalyzes the degradation of glycine. The P protein binds the alpha-amino group of glycine through its pyridoxal phosphate cofactor; CO(2) is released and the remaining methylamine moiety is then transferred to the lipoamide cofactor of the H protein. The sequence is that of Glycine dehydrogenase (decarboxylating) from Shewanella putrefaciens (strain CN-32 / ATCC BAA-453).